Reading from the N-terminus, the 157-residue chain is SsrA-binding protein (157 aa).

Residues 126–157 form a disordered region; that stretch reads GLGKGKQAHDKREAVKERDWQRDRARLMRDRG. The span at 132-157 shows a compositional bias: basic and acidic residues; that stretch reads QAHDKREAVKERDWQRDRARLMRDRG.

The protein belongs to the SmpB family.

Its subcellular location is the cytoplasm. Required for rescue of stalled ribosomes mediated by trans-translation. Binds to transfer-messenger RNA (tmRNA), required for stable association of tmRNA with ribosomes. tmRNA and SmpB together mimic tRNA shape, replacing the anticodon stem-loop with SmpB. tmRNA is encoded by the ssrA gene; the 2 termini fold to resemble tRNA(Ala) and it encodes a 'tag peptide', a short internal open reading frame. During trans-translation Ala-aminoacylated tmRNA acts like a tRNA, entering the A-site of stalled ribosomes, displacing the stalled mRNA. The ribosome then switches to translate the ORF on the tmRNA; the nascent peptide is terminated with the 'tag peptide' encoded by the tmRNA and targeted for degradation. The ribosome is freed to recommence translation, which seems to be the essential function of trans-translation. The chain is SsrA-binding protein from Methylobacterium radiotolerans (strain ATCC 27329 / DSM 1819 / JCM 2831 / NBRC 15690 / NCIMB 10815 / 0-1).